Consider the following 525-residue polypeptide: Neuropilin and tolloid-like protein 2 (525 aa).

The N-terminal stretch at 1–22 is a signal peptide; it reads MALERLCSVLKVLLITVLVVEG. Topologically, residues 23–347 are extracellular; the sequence is IAVAQKTQDG…GVFEQITKTH (325 aa). Cystine bridges form between Cys-45/Cys-72, Cys-100/Cys-122, Cys-177/Cys-207, Cys-234/Cys-256, Cys-297/Cys-309, Cys-304/Cys-322, and Cys-316/Cys-331. CUB domains lie at 45–159 and 177–292; these read CGIW…YSFI and CQFE…FTSF. The LDL-receptor class A domain occupies 296 to 332; it reads PCTSSTFFCHSNMCINNSLVCNGVQNCAYPWDENHCK. The N-linked (GlcNAc...) asparagine glycan is linked to Asn-311. The chain crosses the membrane as a helical span at residues 348 to 368; that stretch reads GTIIGITSGIVLVLLIISILV. The Cytoplasmic segment spans residues 369-525; that stretch reads QVKQPRKKVM…SAQASISIDF (157 aa). Ser-409 is subject to Phosphoserine.

In terms of assembly, interacts with GRIK2 and GRIK3, but neither with AMPA-nor with NMDA-sensitive glutamate receptors. N-glycosylated.

The protein localises to the membrane. Functionally, accessory subunit of neuronal kainate-sensitive glutamate receptors, GRIK2 and GRIK3. Increases kainate-receptor channel activity, slowing the decay kinetics of the receptors, without affecting their expression at the cell surface, and increasing the open probability of the receptor channels. Modulates the agonist sensitivity of kainate receptors. Slows the decay of kainate receptor-mediated excitatory postsynaptic currents (EPSCs), thus directly influencing synaptic transmission. The polypeptide is Neuropilin and tolloid-like protein 2 (NETO2) (Homo sapiens (Human)).